The chain runs to 505 residues: Maturase K (505 aa).

Belongs to the intron maturase 2 family. MatK subfamily.

It is found in the plastid. The protein localises to the chloroplast. Functionally, usually encoded in the trnK tRNA gene intron. Probably assists in splicing its own and other chloroplast group II introns. This is Maturase K from Beta vulgaris (Sugar beet).